The following is a 721-amino-acid chain: Long-chain-fatty-acid--CoA ligase ACSBG1 (721 aa).

The interval 1–64 is disordered; sequence MPRSSEAGYC…SHGLELSAPE (64 aa). The span at 26-43 shows a compositional bias: polar residues; sequence QQGASMGTSPDNSQTSSL. A phosphoserine mark is found at Ser-34, Ser-50, Ser-53, and Ser-70. ATP contacts are provided by residues 279–287, 469–474, Asp-547, and Arg-562; these read TSGTTGNPK and AGYGLS. Position 655 is a phosphotyrosine (Tyr-655). Lys-698 serves as a coordination point for ATP.

Belongs to the ATP-dependent AMP-binding enzyme family. Bubblegum subfamily. Present in testis, at a lower level in brain, and at a very low level in ovary. Not detected in other tissues. tested. Present in Leydig cells of the adult testis and to a lesser degree in the seminiferous tubules in spermatogonia and Sertoli cells (at protein level).

Its subcellular location is the cytoplasm. The protein resides in the cytoplasmic vesicle. It is found in the microsome. The protein localises to the endoplasmic reticulum. It localises to the cell membrane. The catalysed reaction is a long-chain fatty acid + ATP + CoA = a long-chain fatty acyl-CoA + AMP + diphosphate. It carries out the reaction (E)-hexadec-2-enoate + ATP + CoA = (2E)-hexadecenoyl-CoA + AMP + diphosphate. The enzyme catalyses hexadecanoate + ATP + CoA = hexadecanoyl-CoA + AMP + diphosphate. Functionally, catalyzes the conversion of fatty acids such as long-chain and very long-chain fatty acids to their active form acyl-CoAs for both synthesis of cellular lipids, and degradation via beta-oxidation. Can activate diverse saturated, monosaturated and polyunsaturated fatty acids. The sequence is that of Long-chain-fatty-acid--CoA ligase ACSBG1 from Rattus norvegicus (Rat).